Reading from the N-terminus, the 557-residue chain is 2-isopropylmalate synthase (557 aa).

The Pyruvate carboxyltransferase domain occupies 31–304 (PTWCSVDLRD…DPGLNFASML (274 aa)). Mg(2+)-binding residues include aspartate 40, histidine 243, histidine 245, and asparagine 279. Residues 439-557 (IENPIKFLNF…NTMIKDSAAV (119 aa)) are regulatory domain.

Belongs to the alpha-IPM synthase/homocitrate synthase family. LeuA type 2 subfamily. As to quaternary structure, homodimer. Requires Mg(2+) as cofactor.

Its subcellular location is the cytoplasm. The enzyme catalyses 3-methyl-2-oxobutanoate + acetyl-CoA + H2O = (2S)-2-isopropylmalate + CoA + H(+). Its pathway is amino-acid biosynthesis; L-leucine biosynthesis; L-leucine from 3-methyl-2-oxobutanoate: step 1/4. Catalyzes the condensation of the acetyl group of acetyl-CoA with 3-methyl-2-oxobutanoate (2-ketoisovalerate) to form 3-carboxy-3-hydroxy-4-methylpentanoate (2-isopropylmalate). The polypeptide is 2-isopropylmalate synthase (Desulfitobacterium hafniense (strain Y51)).